Here is a 91-residue protein sequence, read N- to C-terminus: RNA-binding protein Hfq (91 aa).

Residues 9–68 (DPYLNALRRERIPVSIYLVNGIKLQGQIESFDQFVILLKNTVNQMVYKHAISTVVPARSV) form the Sm domain. A disordered region spans residues 69 to 91 (SHHNNNHHTAPTEAVENVETQAE).

It belongs to the Hfq family. Homohexamer.

Functionally, RNA chaperone that binds small regulatory RNA (sRNAs) and mRNAs to facilitate mRNA translational regulation in response to envelope stress, environmental stress and changes in metabolite concentrations. Also binds with high specificity to tRNAs. The polypeptide is RNA-binding protein Hfq (Haemophilus influenzae (strain ATCC 51907 / DSM 11121 / KW20 / Rd)).